The following is a 385-amino-acid chain: Palmitoyl-[acyl-carrier-protein] 4-desaturase, chloroplastic (385 aa).

Residues 1–36 (MAMKLNALMTLQCPKRNMFTRIAPPQAGRVRSKVSM) constitute a chloroplast transit peptide. Fe cation is bound by residues Glu126, Glu164, His167, Glu217, Glu250, and His253.

The protein belongs to the fatty acid desaturase type 2 family. In terms of assembly, homodimer. Fe(2+) is required as a cofactor. As to expression, found only in tissues which synthesize petroselinic acid, such as developing seeds.

Its subcellular location is the plastid. The protein localises to the chloroplast. The enzyme catalyses hexadecanoyl-[ACP] + 2 reduced [2Fe-2S]-[ferredoxin] + O2 + 2 H(+) = (4Z)-hexadecenoyl-[ACP] + 2 oxidized [2Fe-2S]-[ferredoxin] + 2 H2O. In terms of biological role, converts palmitoyl-ACP to (4Z)-hexadec-4-enoyl-ACP by introduction of a cis double bond between carbons 4 and 5 of the acyl chain. The chain is Palmitoyl-[acyl-carrier-protein] 4-desaturase, chloroplastic from Coriandrum sativum (Coriander).